A 60-amino-acid chain; its full sequence is Conotoxin Cal6.20 (60 aa).

Residues 1-22 (MKLTCVLIVAVLILTACQVIAA) form the signal peptide. Intrachain disulfides connect Cys32–Cys42, Cys35–Cys48, and Cys41–Cys55.

Belongs to the conotoxin O1 superfamily. As to expression, expressed by the venom duct.

The protein localises to the secreted. In terms of biological role, probable neurotoxin. This chain is Conotoxin Cal6.20, found in Californiconus californicus (California cone).